The primary structure comprises 52 residues: Conotoxin Cal6.3b (52 aa).

A propeptide spanning residues 1 to 4 (KKKR) is cleaved from the precursor. 3 disulfides stabilise this stretch: C12–C23, C15–C27, and C22–C30. Glutamine amide is present on Q50.

As to expression, expressed by the venom duct.

The protein localises to the secreted. Probable neurotoxin with unknown target. Possibly targets ion channels. This Californiconus californicus (California cone) protein is Conotoxin Cal6.3b.